Consider the following 205-residue polypeptide: MKLRGLYAITDSQLLSGKFLSYVEAALDGGVTLLQYRDKNSDESRRLREATELLKLCERYKTRLIINDDAELAARLGVGVHLGQSDGSLPDARALLGHKAIVGATCHGRVELAEQAKADGATYVAFGRFFNSLTKPGAPAVPLDLIAQVRARVHLPIAVIGGITLENAPQLVEHGADLLAVVHGLFGAENTQEVTRRAKAFTALL.

4-amino-2-methyl-5-(diphosphooxymethyl)pyrimidine-binding positions include 35–39 (QYRDK) and asparagine 67. Residues aspartate 68 and aspartate 86 each coordinate Mg(2+). Position 105 (threonine 105) interacts with 4-amino-2-methyl-5-(diphosphooxymethyl)pyrimidine. Residue 132-134 (SLT) participates in 2-[(2R,5Z)-2-carboxy-4-methylthiazol-5(2H)-ylidene]ethyl phosphate binding. Residue lysine 135 coordinates 4-amino-2-methyl-5-(diphosphooxymethyl)pyrimidine. Glycine 162 is a 2-[(2R,5Z)-2-carboxy-4-methylthiazol-5(2H)-ylidene]ethyl phosphate binding site.

Belongs to the thiamine-phosphate synthase family. It depends on Mg(2+) as a cofactor.

The catalysed reaction is 2-[(2R,5Z)-2-carboxy-4-methylthiazol-5(2H)-ylidene]ethyl phosphate + 4-amino-2-methyl-5-(diphosphooxymethyl)pyrimidine + 2 H(+) = thiamine phosphate + CO2 + diphosphate. It catalyses the reaction 2-(2-carboxy-4-methylthiazol-5-yl)ethyl phosphate + 4-amino-2-methyl-5-(diphosphooxymethyl)pyrimidine + 2 H(+) = thiamine phosphate + CO2 + diphosphate. It carries out the reaction 4-methyl-5-(2-phosphooxyethyl)-thiazole + 4-amino-2-methyl-5-(diphosphooxymethyl)pyrimidine + H(+) = thiamine phosphate + diphosphate. It functions in the pathway cofactor biosynthesis; thiamine diphosphate biosynthesis; thiamine phosphate from 4-amino-2-methyl-5-diphosphomethylpyrimidine and 4-methyl-5-(2-phosphoethyl)-thiazole: step 1/1. In terms of biological role, condenses 4-methyl-5-(beta-hydroxyethyl)thiazole monophosphate (THZ-P) and 2-methyl-4-amino-5-hydroxymethyl pyrimidine pyrophosphate (HMP-PP) to form thiamine monophosphate (TMP). This Pseudomonas syringae pv. syringae (strain B728a) protein is Thiamine-phosphate synthase.